We begin with the raw amino-acid sequence, 108 residues long: Nucleoid-associated protein PSHAa1202 (108 aa).

Disordered regions lie at residues 1-20 and 87-108; these read MFKGGMGNMMKQAQQMQDRM and TQERMGKVTGGMQLPPGMKMPF.

It belongs to the YbaB/EbfC family. As to quaternary structure, homodimer.

It localises to the cytoplasm. Its subcellular location is the nucleoid. In terms of biological role, binds to DNA and alters its conformation. May be involved in regulation of gene expression, nucleoid organization and DNA protection. The protein is Nucleoid-associated protein PSHAa1202 of Pseudoalteromonas translucida (strain TAC 125).